The primary structure comprises 374 residues: Chaperone protein DnaJ (374 aa).

One can recognise a J domain in the interval 4-68 (DYYEILGVSR…EMKARFDRFG (65 aa)). The segment at 132-214 (GGDKELTIKH…CGGRGQKEAT (83 aa)) adopts a CR-type zinc-finger fold. 8 residues coordinate Zn(2+): Cys-145, Cys-148, Cys-162, Cys-165, Cys-188, Cys-191, Cys-202, and Cys-205. 4 CXXCXGXG motif repeats span residues 145-152 (CGTCNGSG), 162-169 (CSTCGGTG), 188-195 (CPSCNGSG), and 202-209 (CVDCGGRG).

The protein belongs to the DnaJ family. In terms of assembly, homodimer. Zn(2+) is required as a cofactor.

It is found in the cytoplasm. Functionally, participates actively in the response to hyperosmotic and heat shock by preventing the aggregation of stress-denatured proteins and by disaggregating proteins, also in an autonomous, DnaK-independent fashion. Unfolded proteins bind initially to DnaJ; upon interaction with the DnaJ-bound protein, DnaK hydrolyzes its bound ATP, resulting in the formation of a stable complex. GrpE releases ADP from DnaK; ATP binding to DnaK triggers the release of the substrate protein, thus completing the reaction cycle. Several rounds of ATP-dependent interactions between DnaJ, DnaK and GrpE are required for fully efficient folding. Also involved, together with DnaK and GrpE, in the DNA replication of plasmids through activation of initiation proteins. The protein is Chaperone protein DnaJ of Trichodesmium erythraeum (strain IMS101).